The following is a 108-amino-acid chain: Large ribosomal subunit protein uL24 (108 aa).

The protein belongs to the universal ribosomal protein uL24 family. As to quaternary structure, part of the 50S ribosomal subunit.

One of two assembly initiator proteins, it binds directly to the 5'-end of the 23S rRNA, where it nucleates assembly of the 50S subunit. In terms of biological role, one of the proteins that surrounds the polypeptide exit tunnel on the outside of the subunit. This chain is Large ribosomal subunit protein uL24, found in Mycoplasma mycoides subsp. mycoides SC (strain CCUG 32753 / NCTC 10114 / PG1).